We begin with the raw amino-acid sequence, 425 residues long: Serine--tRNA ligase (425 aa).

L-serine is bound at residue 230–232 (TAE). Residue 261–263 (RSE) participates in ATP binding. E284 provides a ligand contact to L-serine. Residue 348 to 351 (EISS) coordinates ATP. Position 384 (S384) interacts with L-serine.

This sequence belongs to the class-II aminoacyl-tRNA synthetase family. Type-1 seryl-tRNA synthetase subfamily. As to quaternary structure, homodimer. The tRNA molecule binds across the dimer.

Its subcellular location is the cytoplasm. It carries out the reaction tRNA(Ser) + L-serine + ATP = L-seryl-tRNA(Ser) + AMP + diphosphate + H(+). It catalyses the reaction tRNA(Sec) + L-serine + ATP = L-seryl-tRNA(Sec) + AMP + diphosphate + H(+). It functions in the pathway aminoacyl-tRNA biosynthesis; selenocysteinyl-tRNA(Sec) biosynthesis; L-seryl-tRNA(Sec) from L-serine and tRNA(Sec): step 1/1. Functionally, catalyzes the attachment of serine to tRNA(Ser). Is also able to aminoacylate tRNA(Sec) with serine, to form the misacylated tRNA L-seryl-tRNA(Sec), which will be further converted into selenocysteinyl-tRNA(Sec). The polypeptide is Serine--tRNA ligase (Streptococcus thermophilus (strain ATCC BAA-491 / LMD-9)).